We begin with the raw amino-acid sequence, 263 residues long: Linear gramicidin dehydrogenase LgrE (263 aa).

Ser-96 is a catalytic residue.

The protein belongs to the thioesterase family.

Functionally, in the final step of gramicidin biosynthesis, reduces the pentadecapeptide-aldehyde intermediate, that is released from the terminal module of the non-ribosomal peptide synthetase LgrD, to the final product ethanolamine-containing gramicidin. The chain is Linear gramicidin dehydrogenase LgrE (lgrE) from Brevibacillus parabrevis.